We begin with the raw amino-acid sequence, 316 residues long: MHKSHLDSVAPQLRSDLQCIKASSSSLCDQMECMLRVLQDFKRSSPPPSPDIEKPCVVPPRRAPRRDNRISHRTSDLSEADSACCMDLPSDVSPGSCGQRGLEWDSGYSEVSGGSLRGEEDDIVEEESETSVPTVVLRRLPTPSCQRLSSGGFLNSRQGRIRPKSTSDVCLEQWRGIGLGSDSQDWTGCLLSQSRSRQPLVLGDNSFADLVKQWMDLPENVDEEGRRVRDGGRWLHKPHGFLISLSGNVKRRLGNMSRLRRSEQEAVKRMSCPQLGCRPLSLYYHQSLSDIAEASTNLLHCRSRQPIICNEGAGFL.

2 disordered regions span residues 43–74 (RSSP…SHRT) and 108–130 (YSEV…ESET). A compositionally biased stretch (basic and acidic residues) spans 65 to 74 (RRDNRISHRT). Positions 119-129 (EEDDIVEEESE) are enriched in acidic residues. Positions 182–219 (DSQDWTGCLLSQSRSRQPLVLGDNSFADLVKQWMDLPE) are inka box.

It belongs to the INKA family.

The protein localises to the nucleus. In terms of biological role, inhibitor of the serine/threonine-protein kinase pak4/pak5. Acts by binding pak4/pak5 in a substrate-like manner, inhibiting the protein kinase activity. In Xenopus laevis (African clawed frog), this protein is PAK4-inhibitor inka2.